Here is a 494-residue protein sequence, read N- to C-terminus: Putative myristoylated protein 006R (494 aa).

Gly-2 is lipidated: N-myristoyl glycine; by host. A run of 3 helical transmembrane segments spans residues 193 to 213, 214 to 234, and 465 to 485; these read VAALVAIVLGVPVVSVIGGIA, VAGRWMFPISILAGAGCLVVW, and WLLYLGVALIIVGIFGSILAF.

It belongs to the IIV-6 118L/458R family.

It is found in the membrane. In Aedes vexans (Inland floodwater mosquito), this protein is Putative myristoylated protein 006R.